A 499-amino-acid chain; its full sequence is Glycerol kinase (499 aa).

Thr12 lines the ADP pocket. ATP contacts are provided by Thr12, Thr13, and Ser14. A sn-glycerol 3-phosphate-binding site is contributed by Thr12. Arg16 contacts ADP. The sn-glycerol 3-phosphate site is built by Arg82, Glu83, Tyr134, and Asp240. Residues Arg82, Glu83, Tyr134, Asp240, and Gln241 each contribute to the glycerol site. ADP is bound by residues Thr262 and Gly306. Positions 262, 306, 310, and 412 each coordinate ATP. Residues Gly412 and Asn416 each contribute to the ADP site.

The protein belongs to the FGGY kinase family.

The catalysed reaction is glycerol + ATP = sn-glycerol 3-phosphate + ADP + H(+). Its pathway is polyol metabolism; glycerol degradation via glycerol kinase pathway; sn-glycerol 3-phosphate from glycerol: step 1/1. Its activity is regulated as follows. Inhibited by fructose 1,6-bisphosphate (FBP). Key enzyme in the regulation of glycerol uptake and metabolism. Catalyzes the phosphorylation of glycerol to yield sn-glycerol 3-phosphate. The sequence is that of Glycerol kinase from Nocardia farcinica (strain IFM 10152).